A 290-amino-acid chain; its full sequence is Zinc finger protein-like 1 homolog (290 aa).

The segment at Met-1–Trp-43 adopts a B box-type; degenerate zinc-finger fold. The segment at Cys-53–Ser-101 adopts an RING-type; atypical zinc-finger fold. The span at Asn-156 to Arg-168 shows a compositional bias: polar residues. Residues Asn-156–Ser-175 are disordered. Residues Trp-249–Leu-269 form a helical membrane-spanning segment.

It belongs to the ZFPL1 family.

It localises to the membrane. This chain is Zinc finger protein-like 1 homolog, found in Aedes aegypti (Yellowfever mosquito).